Consider the following 206-residue polypeptide: Ribosomal RNA small subunit methyltransferase G (206 aa).

S-adenosyl-L-methionine-binding positions include glycine 73, leucine 78, 124–125, and arginine 139; that span reads VE.

Belongs to the methyltransferase superfamily. RNA methyltransferase RsmG family.

It localises to the cytoplasm. It catalyses the reaction guanosine(527) in 16S rRNA + S-adenosyl-L-methionine = N(7)-methylguanosine(527) in 16S rRNA + S-adenosyl-L-homocysteine. In terms of biological role, specifically methylates the N7 position of guanine in position 527 of 16S rRNA. The sequence is that of Ribosomal RNA small subunit methyltransferase G from Yersinia pseudotuberculosis serotype O:3 (strain YPIII).